A 249-amino-acid polypeptide reads, in one-letter code: ATP synthase subunit a (249 aa).

Helical transmembrane passes span 30–50 (QSPL…YVGM), 86–106 (FFPF…LGLL), 115–135 (HIAV…LASI), 146–166 (FLPA…EIIS), 191–211 (VFAG…VLAI), and 218–238 (IALT…FAIL).

Belongs to the ATPase A chain family. F-type ATPases have 2 components, CF(1) - the catalytic core - and CF(0) - the membrane proton channel. CF(1) has five subunits: alpha(3), beta(3), gamma(1), delta(1), epsilon(1). CF(0) has three main subunits: a(1), b(2) and c(9-12). The alpha and beta chains form an alternating ring which encloses part of the gamma chain. CF(1) is attached to CF(0) by a central stalk formed by the gamma and epsilon chains, while a peripheral stalk is formed by the delta and b chains.

Its subcellular location is the cell inner membrane. In terms of biological role, key component of the proton channel; it plays a direct role in the translocation of protons across the membrane. This Gluconobacter oxydans (strain 621H) (Gluconobacter suboxydans) protein is ATP synthase subunit a.